We begin with the raw amino-acid sequence, 312 residues long: Malate dehydrogenase (312 aa).

Residues 7–13 and aspartate 34 contribute to the NAD(+) site; that span reads GAAGGIG. 2 residues coordinate substrate: arginine 81 and arginine 87. Residues asparagine 94 and 117-119 each bind NAD(+); that span reads ITN. Substrate-binding residues include asparagine 119 and arginine 153. Catalysis depends on histidine 177, which acts as the Proton acceptor. Methionine 227 provides a ligand contact to NAD(+).

This sequence belongs to the LDH/MDH superfamily. MDH type 1 family. As to quaternary structure, homodimer.

The catalysed reaction is (S)-malate + NAD(+) = oxaloacetate + NADH + H(+). In terms of biological role, catalyzes the reversible oxidation of malate to oxaloacetate. In Salmonella choleraesuis (strain SC-B67), this protein is Malate dehydrogenase.